The primary structure comprises 409 residues: Imidazolonepropionase (409 aa).

Fe(3+)-binding residues include histidine 70 and histidine 72. Positions 70 and 72 each coordinate Zn(2+). 3 residues coordinate 4-imidazolone-5-propanoate: arginine 79, tyrosine 137, and histidine 164. Tyrosine 137 serves as a coordination point for N-formimidoyl-L-glutamate. Fe(3+) is bound at residue histidine 225. Position 225 (histidine 225) interacts with Zn(2+). Residue glutamine 228 coordinates 4-imidazolone-5-propanoate. Residues asparagine 314 and glycine 316 each coordinate N-formimidoyl-L-glutamate. A 4-imidazolone-5-propanoate-binding site is contributed by threonine 317.

The protein belongs to the metallo-dependent hydrolases superfamily. HutI family. Zn(2+) is required as a cofactor. Fe(3+) serves as cofactor.

The protein resides in the cytoplasm. It carries out the reaction 4-imidazolone-5-propanoate + H2O = N-formimidoyl-L-glutamate. Its pathway is amino-acid degradation; L-histidine degradation into L-glutamate; N-formimidoyl-L-glutamate from L-histidine: step 3/3. In terms of biological role, catalyzes the hydrolytic cleavage of the carbon-nitrogen bond in imidazolone-5-propanoate to yield N-formimidoyl-L-glutamate. It is the third step in the universal histidine degradation pathway. This is Imidazolonepropionase from Paenarthrobacter aurescens (strain TC1).